The chain runs to 671 residues: uncharacterized protein (671 aa).

The chain crosses the membrane as a helical span at residues 39–56 (ATVTVVILLLILLLGWGY).

Its subcellular location is the membrane. This is an uncharacterized protein from Treponema pallidum (strain Nichols).